We begin with the raw amino-acid sequence, 275 residues long: 4-diphosphocytidyl-2-C-methyl-D-erythritol kinase (275 aa).

The active site involves Lys-14. An ATP-binding site is contributed by 98 to 108 (PMGAGLGGGSS). Asp-140 is a catalytic residue.

It belongs to the GHMP kinase family. IspE subfamily.

The catalysed reaction is 4-CDP-2-C-methyl-D-erythritol + ATP = 4-CDP-2-C-methyl-D-erythritol 2-phosphate + ADP + H(+). It functions in the pathway isoprenoid biosynthesis; isopentenyl diphosphate biosynthesis via DXP pathway; isopentenyl diphosphate from 1-deoxy-D-xylulose 5-phosphate: step 3/6. Functionally, catalyzes the phosphorylation of the position 2 hydroxy group of 4-diphosphocytidyl-2C-methyl-D-erythritol. The chain is 4-diphosphocytidyl-2-C-methyl-D-erythritol kinase from Francisella tularensis subsp. novicida (strain U112).